The sequence spans 642 residues: Threonine--tRNA ligase (642 aa).

A TGS domain is found at 1–61 (MPIITLPDGS…EEDASLEIIT (61 aa)). The tract at residues 244 to 535 (DHRKIGKQLD…LIEEYAGFFP (292 aa)) is catalytic. Zn(2+) is bound by residues cysteine 335, histidine 386, and histidine 512.

Belongs to the class-II aminoacyl-tRNA synthetase family. Homodimer. Requires Zn(2+) as cofactor.

The protein localises to the cytoplasm. The enzyme catalyses tRNA(Thr) + L-threonine + ATP = L-threonyl-tRNA(Thr) + AMP + diphosphate + H(+). Catalyzes the attachment of threonine to tRNA(Thr) in a two-step reaction: L-threonine is first activated by ATP to form Thr-AMP and then transferred to the acceptor end of tRNA(Thr). Also edits incorrectly charged L-seryl-tRNA(Thr). The sequence is that of Threonine--tRNA ligase from Vibrio vulnificus (strain YJ016).